Consider the following 67-residue polypeptide: Probable tautomerase bsl7456 (67 aa).

The active-site Proton acceptor; via imino nitrogen is proline 2.

It belongs to the 4-oxalocrotonate tautomerase family.

This is Probable tautomerase bsl7456 from Bradyrhizobium diazoefficiens (strain JCM 10833 / BCRC 13528 / IAM 13628 / NBRC 14792 / USDA 110).